Here is a 183-residue protein sequence, read N- to C-terminus: MSLACSRSLFFMAFTAGILALGASYYLEYAVGLVPCSLCLVQRLFMSVLTLCCGLAAVHGPQRVGLSLYWMVTLLSSLGGTTAAWRQVLFQSDSLQELAHCAPNPEEMFSSLPWLCALMRMFNDTADCAELSWTLFDLSIPEWSLLFFVGMSILAVYQLLRQVWMALQRPLSGQPSHPALVRD.

The Cytoplasmic segment spans residues 1–9 (MSLACSRSL). A helical membrane pass occupies residues 10-26 (FFMAFTAGILALGASYY). Residues 27 to 44 (LEYAVGLVPCSLCLVQRL) are Periplasmic-facing. The cysteines at positions 36 and 39 are disulfide-linked. A helical membrane pass occupies residues 45–61 (FMSVLTLCCGLAAVHGP). At 62 to 68 (QRVGLSL) the chain is on the cytoplasmic side. The chain crosses the membrane as a helical span at residues 69–85 (YWMVTLLSSLGGTTAAW). Topologically, residues 86 to 142 (RQVLFQSDSLQELAHCAPNPEEMFSSLPWLCALMRMFNDTADCAELSWTLFDLSIPE) are periplasmic. Residues Cys101 and Cys128 are joined by a disulfide bond. A helical transmembrane segment spans residues 143-161 (WSLLFFVGMSILAVYQLLR). The Cytoplasmic segment spans residues 162 to 183 (QVWMALQRPLSGQPSHPALVRD).

This sequence belongs to the DsbB family.

The protein localises to the cell inner membrane. In terms of biological role, required for disulfide bond formation in some periplasmic proteins. Acts by oxidizing the DsbA protein. This Pseudomonas fluorescens (strain Pf0-1) protein is Disulfide bond formation protein B 2.